The primary structure comprises 210 residues: Large ribosomal subunit protein bL25 (210 aa).

Residues 190-210 form a disordered region; that stretch reads LKSEGAEGGEAEAGQAEEGEE. Over residues 196-210 the composition is skewed to acidic residues; the sequence is EGGEAEAGQAEEGEE.

This sequence belongs to the bacterial ribosomal protein bL25 family. CTC subfamily. Part of the 50S ribosomal subunit; part of the 5S rRNA/L5/L18/L25 subcomplex. Contacts the 5S rRNA. Binds to the 5S rRNA independently of L5 and L18.

In terms of biological role, this is one of the proteins that binds to the 5S RNA in the ribosome where it forms part of the central protuberance. The protein is Large ribosomal subunit protein bL25 of Chelativorans sp. (strain BNC1).